A 216-amino-acid polypeptide reads, in one-letter code: GTP-binding nuclear protein spi1 (216 aa).

Residues 6-170 form the Small GTPase Ran-type domain; sequence NVPTFKLVLV…LWLARKLVGN (165 aa). 17–24 contacts GTP; it reads DGGTGKTT. Thr20 is modified (phosphothreonine). A switch-I region spans residues 36 to 44; sequence KKYIATLGV. Residues Gly67, 121-124, and 149-151 each bind GTP; these read NKVD and SAK. The switch-II stretch occupies residues 67-83; the sequence is GQEKLGGLRDGYYIQGQ.

This sequence belongs to the small GTPase superfamily. Ran family. In terms of assembly, oligomer of dis3, pim1 and spi1. Found in a nuclear export complex with RanGTP, exportin and pre-miRNA. Interacts with fft3.

The protein localises to the nucleus. GTP-binding protein involved in nucleocytoplasmic transport. Required for the import of protein into the nucleus and also for RNA export. In Schizosaccharomyces pombe (strain 972 / ATCC 24843) (Fission yeast), this protein is GTP-binding nuclear protein spi1 (spi1).